The sequence spans 585 residues: FAD-linked oxidoreductase apf9 (585 aa).

An N-terminal signal peptide occupies residues 1 to 19 (MKPHTVSLVLSNLASLAAA). Residues asparagine 40, asparagine 92, and asparagine 117 are each glycosylated (N-linked (GlcNAc...) asparagine). Residues 108–294 (IGNSPVYVVN…TEITVKTYPT (187 aa)) form the FAD-binding PCMH-type domain. A Pros-8alpha-FAD histidine modification is found at histidine 145. 3 N-linked (GlcNAc...) asparagine glycosylation sites follow: asparagine 352, asparagine 412, and asparagine 495.

It belongs to the oxygen-dependent FAD-linked oxidoreductase family. The cofactor is FAD.

Its pathway is secondary metabolite biosynthesis. Its function is as follows. FAD-linked oxidoreductase; part of the gene cluster that mediates the biosynthesis of the cyclic tetrapeptide apicidin F (APF). The non-ribosomal peptide synthetase apf1 incorporates four different amino acids to produce apicidin F: L-phenylalanine, D-pipecolic acid (D-pip), N-methoxy-L-tryptophan and L-2-aminooctanedioic acid. L-Phenylalanine is the only proteinogenic amino acid directly used by apf1. The 3 other apf1 substrates are non-proteinogenic and have to be modified by other enzymes of the cluster. Lysine is converted to delta-1-pyrroline-5-carboxylate (P5C) which is reduced to L-pipecolic acid (L-pip) by apf3. L-pip is epimerized to D-pip, probably by apf1 activity, prior to incorporation. L-Tryptophan is N-oxidyzed by one of the cytochrome P450 monooxygenases (apf7 or apf8), and further methylated at the hydroxy group by the O-methyltransferase apf6 to yield N-methoxy-L-tryptophan. The synthesis of the fourth apf1 substrate is more complex. The fatty acid synthase apf5 is involved in the synthesis of the octanoic acid backbone of L-2-aminooctanedioic acid by fixing one acetyl-CoA unit and three malonyl-CoA units. Then one of the cytochrome P450 monooxygenases (apf7 or apf8) may oxidize this backbone to 2-oxooctanoic acid. The aminotransferase apf4 is predicted to catalyze the exchange of the keto group with an amino group. The next step would be the oxidation of 2-aminooctanoic acid by one of the cytochrome P450 monooxygenases (apf7 or apf8). The last step is the oxidation of 2-amino-8-hydroxyoctanoic acid to 2-aminooctanedioic acid is catalyzed by the FAD-dependent monooxygenase apf9. The sequence is that of FAD-linked oxidoreductase apf9 from Gibberella fujikuroi (strain CBS 195.34 / IMI 58289 / NRRL A-6831) (Bakanae and foot rot disease fungus).